A 145-amino-acid chain; its full sequence is D-aminoacyl-tRNA deacylase (145 aa).

Residues 137–138 carry the Gly-cisPro motif, important for rejection of L-amino acids motif; that stretch reads GP.

The protein belongs to the DTD family. Homodimer.

The protein localises to the cytoplasm. The catalysed reaction is glycyl-tRNA(Ala) + H2O = tRNA(Ala) + glycine + H(+). The enzyme catalyses a D-aminoacyl-tRNA + H2O = a tRNA + a D-alpha-amino acid + H(+). Its function is as follows. An aminoacyl-tRNA editing enzyme that deacylates mischarged D-aminoacyl-tRNAs. Also deacylates mischarged glycyl-tRNA(Ala), protecting cells against glycine mischarging by AlaRS. Acts via tRNA-based rather than protein-based catalysis; rejects L-amino acids rather than detecting D-amino acids in the active site. By recycling D-aminoacyl-tRNA to D-amino acids and free tRNA molecules, this enzyme counteracts the toxicity associated with the formation of D-aminoacyl-tRNA entities in vivo and helps enforce protein L-homochirality. This chain is D-aminoacyl-tRNA deacylase, found in Ectopseudomonas mendocina (strain ymp) (Pseudomonas mendocina).